The primary structure comprises 206 residues: uncharacterized protein (206 aa).

The N-terminal stretch at M1–A18 is a signal peptide.

This is an uncharacterized protein from Acanthamoeba polyphaga mimivirus (APMV).